Reading from the N-terminus, the 69-residue chain is Ribosome modulation factor (69 aa).

This sequence belongs to the ribosome modulation factor family.

Its subcellular location is the cytoplasm. In terms of biological role, during stationary phase, converts 70S ribosomes to an inactive dimeric form (100S ribosomes). The protein is Ribosome modulation factor of Chromohalobacter salexigens (strain ATCC BAA-138 / DSM 3043 / CIP 106854 / NCIMB 13768 / 1H11).